Here is a 243-residue protein sequence, read N- to C-terminus: Juxtaposed with another zinc finger protein 1 (243 aa).

A C2H2-type 1 zinc finger spans residues 12-37; it reads NTCRFGGCGLHFPTLADLIEHIEDNH. Residues 39 to 79 form a required for interaction with NR2C2 region; that stretch reads DTDPRVLEKQELQQPTYVALSYINRFMTDAARREQESLKKK. Residues 89–108 are compositionally biased toward polar residues; sequence SSSVSRGNVSTPPRHSSGSL. The segment at 89–151 is disordered; the sequence is SSSVSRGNVS…SDSDESWTTE (63 aa). Phosphothreonine is present on residues threonine 109 and threonine 113. Residues 118–130 are compositionally biased toward low complexity; sequence PSSSFRSSTPTGS. The span at 131-148 shows a compositional bias: acidic residues; that stretch reads EYDEEEVDYEESDSDESW. The C2H2-type 2 zinc finger occupies 173 to 198; the sequence is FACPVPGCKKRYKNVNGIKYHAKNGH. The C2H2-type 3; degenerate zinc finger occupies 208-230; that stretch reads FKCRCGKSYKTAQGLRHHTINFH.

Interacts with NR2C2 (via ligand-binding region). As to expression, expressed in range of tissues with highest expression levels in testis, liver, muscle and fat and lowest levels in kidney. Detected in liver and white adipose tissue (at protein level).

The protein localises to the nucleus. Its function is as follows. Acts as a transcriptional corepressor of orphan nuclear receptor NR2C2. Inhibits expression of the gluconeogenesis enzyme PCK2 through inhibition of NR2C2 activity. Also involved in transcriptional activation of NAMPT by promoting expression of PPARA and PPARD. Plays a role in lipid metabolism by suppressing lipogenesis, increasing lipolysis and decreasing lipid accumulation in adipose tissue. Plays a role in glucose homeostasis by improving glucose metabolism and insulin sensitivity. The protein is Juxtaposed with another zinc finger protein 1 (Jazf1) of Mus musculus (Mouse).